The following is a 178-amino-acid chain: Ribosome maturation factor RimP (178 aa).

This sequence belongs to the RimP family.

It localises to the cytoplasm. In terms of biological role, required for maturation of 30S ribosomal subunits. The chain is Ribosome maturation factor RimP from Streptococcus pyogenes serotype M18 (strain MGAS8232).